The sequence spans 408 residues: NADH-quinone oxidoreductase subunit D (408 aa).

Belongs to the complex I 49 kDa subunit family. As to quaternary structure, NDH-1 is composed of 14 different subunits. Subunits NuoB, C, D, E, F, and G constitute the peripheral sector of the complex.

It localises to the cell inner membrane. It catalyses the reaction a quinone + NADH + 5 H(+)(in) = a quinol + NAD(+) + 4 H(+)(out). NDH-1 shuttles electrons from NADH, via FMN and iron-sulfur (Fe-S) centers, to quinones in the respiratory chain. The immediate electron acceptor for the enzyme in this species is believed to be ubiquinone. Couples the redox reaction to proton translocation (for every two electrons transferred, four hydrogen ions are translocated across the cytoplasmic membrane), and thus conserves the redox energy in a proton gradient. The polypeptide is NADH-quinone oxidoreductase subunit D (Campylobacter jejuni subsp. jejuni serotype O:2 (strain ATCC 700819 / NCTC 11168)).